The following is an 83-amino-acid chain: Hainantoxin-III 7 (83 aa).

Positions Met-1 to Ala-21 are cleaved as a signal peptide. The propeptide occupies Ser-22–Arg-48. Intrachain disulfides connect Cys-50–Cys-65, Cys-57–Cys-70, and Cys-64–Cys-77. Leu-81 carries the leucine amide modification.

This sequence belongs to the neurotoxin 10 (Hwtx-1) family. 15 (Hntx-3) subfamily. As to quaternary structure, monomer. As to expression, expressed by the venom gland.

The protein localises to the secreted. Selective antagonist of neuronal tetrodotoxin (TTX)-sensitive voltage-gated sodium channels (IC(50)=1270 nM on Nav1.1/SCN1A, 270 nM on Nav1.2/SCN2A, 491 nM on Nav1.3/SCN3A and 232 nM on Nav1.7/SCN9A). This toxin suppress Nav1.7 current amplitude without significantly altering the activation, inactivation, and repriming kinetics. Short extreme depolarizations partially activate the toxin-bound channel, indicating voltage-dependent inhibition of this toxin. This toxin increases the deactivation of the Nav1.7 current after extreme depolarizations. The toxin-Nav1.7 complex is gradually dissociated upon prolonged strong depolarizations in a voltage-dependent manner, and the unbound toxin rebinds to Nav1.7 after a long repolarization. Moreover, analysis of chimeric channels showed that the DIIS3-S4 linker is critical for toxin binding to Nav1.7. These data are consistent with this toxin interacting with Nav1.7 site 4 and trapping the domain II voltage sensor in the closed state. This is Hainantoxin-III 7 from Cyriopagopus hainanus (Chinese bird spider).